Consider the following 340-residue polypeptide: Holliday junction branch migration complex subunit RuvB (340 aa).

The interval 1–184 (MNENLDPTTK…FGISSRLQYY (184 aa)) is large ATPase domain (RuvB-L). Residues leucine 23, arginine 24, glycine 65, lysine 68, threonine 69, threonine 70, 131–133 (EDF), arginine 174, tyrosine 184, and arginine 221 each bind ATP. Residue threonine 69 participates in Mg(2+) binding. The interval 185 to 255 (STELLTTIVE…ISKYALKALN (71 aa)) is small ATPAse domain (RuvB-S). The segment at 258-340 (AHGLDEMDNK…INTNIQGGLF (83 aa)) is head domain (RuvB-H). Positions 313 and 318 each coordinate DNA.

It belongs to the RuvB family. As to quaternary structure, homohexamer. Forms an RuvA(8)-RuvB(12)-Holliday junction (HJ) complex. HJ DNA is sandwiched between 2 RuvA tetramers; dsDNA enters through RuvA and exits via RuvB. An RuvB hexamer assembles on each DNA strand where it exits the tetramer. Each RuvB hexamer is contacted by two RuvA subunits (via domain III) on 2 adjacent RuvB subunits; this complex drives branch migration. In the full resolvosome a probable DNA-RuvA(4)-RuvB(12)-RuvC(2) complex forms which resolves the HJ.

It localises to the cytoplasm. The enzyme catalyses ATP + H2O = ADP + phosphate + H(+). In terms of biological role, the RuvA-RuvB-RuvC complex processes Holliday junction (HJ) DNA during genetic recombination and DNA repair, while the RuvA-RuvB complex plays an important role in the rescue of blocked DNA replication forks via replication fork reversal (RFR). RuvA specifically binds to HJ cruciform DNA, conferring on it an open structure. The RuvB hexamer acts as an ATP-dependent pump, pulling dsDNA into and through the RuvAB complex. RuvB forms 2 homohexamers on either side of HJ DNA bound by 1 or 2 RuvA tetramers; 4 subunits per hexamer contact DNA at a time. Coordinated motions by a converter formed by DNA-disengaged RuvB subunits stimulates ATP hydrolysis and nucleotide exchange. Immobilization of the converter enables RuvB to convert the ATP-contained energy into a lever motion, pulling 2 nucleotides of DNA out of the RuvA tetramer per ATP hydrolyzed, thus driving DNA branch migration. The RuvB motors rotate together with the DNA substrate, which together with the progressing nucleotide cycle form the mechanistic basis for DNA recombination by continuous HJ branch migration. Branch migration allows RuvC to scan DNA until it finds its consensus sequence, where it cleaves and resolves cruciform DNA. This is Holliday junction branch migration complex subunit RuvB from Flavobacterium johnsoniae (strain ATCC 17061 / DSM 2064 / JCM 8514 / BCRC 14874 / CCUG 350202 / NBRC 14942 / NCIMB 11054 / UW101) (Cytophaga johnsonae).